Here is a 209-residue protein sequence, read N- to C-terminus: Small ribosomal subunit protein uS4 (209 aa).

Residues 23–46 are disordered; sequence SRNPLLKKPHPPGQHGMQRKKKSD. Positions 93 to 156 constitute an S4 RNA-binding domain; that stretch reads CRLDNMVYRM…RKLQSVQESL (64 aa).

The protein belongs to the universal ribosomal protein uS4 family. Part of the 30S ribosomal subunit. Contacts protein S5. The interaction surface between S4 and S5 is involved in control of translational fidelity.

Functionally, one of the primary rRNA binding proteins, it binds directly to 16S rRNA where it nucleates assembly of the body of the 30S subunit. Its function is as follows. With S5 and S12 plays an important role in translational accuracy. This is Small ribosomal subunit protein uS4 from Chlamydia felis (strain Fe/C-56) (Chlamydophila felis).